Consider the following 880-residue polypeptide: Inner centromere protein (880 aa).

The interval 52-104 (EPELMPKTPSQKNRRKKRRVSNIQDENRDPVRKRLSRRKSRSSQVGTRHLRSK) is disordered. 3 positions are modified to phosphoserine: serine 72, serine 142, and serine 147. 2 positions are modified to phosphothreonine: threonine 149 and threonine 189. The interval 175–229 (KGSLPPSPVSQGTLTSEEELTPKKSEAGKLDSVTVNSLKATPQSPKNRGVGEGRS) is disordered. The residue at position 190 (serine 190) is a Phosphoserine. Basic and acidic residues predominate over residues 194–203 (LTPKKSEAGK). Phosphothreonine occurs at positions 195 and 215. Polar residues predominate over residues 207-220 (VTVNSLKATPQSPK). Residues serine 218, serine 239, serine 245, serine 248, serine 251, and serine 259 each carry the phosphoserine modification. The residue at position 270 (threonine 270) is a Phosphothreonine. Serine 284 and serine 290 each carry phosphoserine. Disordered regions lie at residues 303-322 (KQENGSRRSSRRIAKKAGKE) and 350-461 (EQEP…PANK). The span at 352 to 366 (EPVEVAEPEEAEEEQ) shows a compositional bias: acidic residues. Serine 376 bears the Phosphoserine mark. Threonine 382 is subject to Phosphothreonine. Polar residues predominate over residues 385–402 (AISTPTSKPAAAGQTTTV). Serine 421 carries the post-translational modification Phosphoserine. A compositionally biased stretch (acidic residues) spans 434 to 445 (EPDEEQLEDEEL). Asparagine 450 carries an N-linked (GlcNAc...) asparagine glycan. Residue threonine 452 is modified to Phosphothreonine. A phosphoserine mark is found at serine 454 and serine 488. The interval 506–733 (KCSFVEKERQ…EEKKRKEEQQ (228 aa)) is SAH. Positions 506–759 (KCSFVEKERQ…EVAAARKVLN (254 aa)) form a coiled coil. Disordered stretches follow at residues 513-541 (ERQRLESLRRKEEAEQRRRQKVEEDKRRR), 563-617 (VEQM…KQEE), 629-713 (EEER…KALR), and 775-813 (TPQGPKSIPKISVDDYGMDLNSDDSTDDESHPRKPIPSW). Basic and acidic residues-rich tracts occupy residues 563-596 (VEQMKEEKKKQIEQKFAQIDEKTEKAKEERLAEK), 604-617 (KKMEEVEARRKQEE), and 630-713 (EERR…KALR). The tract at residues 794 to 868 (LNSDDSTDDE…RTSSAVWNSP (75 aa)) is IN box. A phosphoserine mark is found at serine 796 and serine 799. The residue at position 800 (threonine 800) is a Phosphothreonine. Residue threonine 860 is modified to Phosphothreonine; by AURKB. Phosphoserine is present on residues serine 861, serine 862, and serine 867.

Belongs to the INCENP family. Component of the chromosomal passenger complex (CPC) composed of at least BIRC5/survivin, CDCA8/borealin, INCENP, AURKB or AURKC; in the complex binds directly to AURKB or AURKC via the IN box, and forms a triple-helix bundle-based subcomplex with BIRC5 and CDCA8 via its N-terminus. The reported homodimerization is questioned as the SAH domain is shown to be monomeric. Interacts with H2AZ1. Interacts with CBX1 and CBX3. Interacts with tubulin beta chain. Interacts with EVI5. Interacts with CBX5; POGZ and INCENP compete for interaction with CBX5. Interacts with POGZ. Interacts with JTB. Phosphorylation by AURKB at its C-terminal part is important for AURKB activation by INCENP.

It localises to the chromosome. The protein localises to the centromere. It is found in the cytoplasm. Its subcellular location is the cytoskeleton. The protein resides in the spindle. It localises to the nucleus. The protein localises to the kinetochore. It is found in the midbody. In terms of biological role, component of the chromosomal passenger complex (CPC), a complex that acts as a key regulator of mitosis. The CPC complex has essential functions at the centromere in ensuring correct chromosome alignment and segregation and is required for chromatin-induced microtubule stabilization and spindle assembly. Acts as a scaffold regulating CPC localization and activity. The C-terminus associates with AURKB or AURKC, the N-terminus associated with BIRC5/survivin and CDCA8/borealin tethers the CPC to the inner centromere, and the microtubule binding activity within the central SAH domain directs AURKB/C toward substrates near microtubules. The flexibility of the SAH domain is proposed to allow AURKB/C to follow substrates on dynamic microtubules while ensuring CPC docking to static chromatin. Activates AURKB and AURKC. Controls the kinetochore localization of BUB1. This is Inner centromere protein (Incenp) from Mus musculus (Mouse).